Consider the following 691-residue polypeptide: Elongation factor G (691 aa).

In terms of domain architecture, tr-type G spans 10–284; the sequence is KMYRNIGIMA…AIVKYLPSPL (275 aa). Residues 19–26, 83–87, and 137–140 contribute to the GTP site; these read AHIDAGKT, DTPGH, and NKMD.

The protein belongs to the TRAFAC class translation factor GTPase superfamily. Classic translation factor GTPase family. EF-G/EF-2 subfamily.

It localises to the cytoplasm. Its function is as follows. Catalyzes the GTP-dependent ribosomal translocation step during translation elongation. During this step, the ribosome changes from the pre-translocational (PRE) to the post-translocational (POST) state as the newly formed A-site-bound peptidyl-tRNA and P-site-bound deacylated tRNA move to the P and E sites, respectively. Catalyzes the coordinated movement of the two tRNA molecules, the mRNA and conformational changes in the ribosome. This is Elongation factor G from Clostridium tetani (strain Massachusetts / E88).